The sequence spans 434 residues: ATP-dependent protease ATPase subunit HslU (434 aa).

ATP is bound by residues Ile-18, 60-65, Asp-247, Glu-312, and Arg-384; that span reads GVGKTE.

This sequence belongs to the ClpX chaperone family. HslU subfamily. In terms of assembly, a double ring-shaped homohexamer of HslV is capped on each side by a ring-shaped HslU homohexamer. The assembly of the HslU/HslV complex is dependent on binding of ATP.

It localises to the cytoplasm. Its function is as follows. ATPase subunit of a proteasome-like degradation complex; this subunit has chaperone activity. The binding of ATP and its subsequent hydrolysis by HslU are essential for unfolding of protein substrates subsequently hydrolyzed by HslV. HslU recognizes the N-terminal part of its protein substrates and unfolds these before they are guided to HslV for hydrolysis. The polypeptide is ATP-dependent protease ATPase subunit HslU (Brucella suis (strain ATCC 23445 / NCTC 10510)).